The following is a 1315-amino-acid chain: Tetratricopeptide repeat protein 21B (1315 aa).

TPR repeat units lie at residues 108-141 (RKAL…PHDS), 145-178 (PILK…GNDI), 192-225 (QNYS…QLAL), 285-323 (AQLF…TPQQ), 324-357 (AEIA…NESN), 492-525 (PQAV…SPSY), 563-596 (PLYH…PGMR), 616-649 (LSIF…FSGT), 721-754 (PRSF…NPKD), 756-788 (TLAR…GQQN), 790-821 (LCYD…EPVS), 830-863 (GRSQ…QARI), 883-916 (AEIC…CETD), 918-950 (KIML…DQDN), 951-984 (EPAT…KPDN), 1022-1055 (PGFQ…SDWG), 1196-1229 (EKSW…NRSC), 1231-1263 (KAYE…SNQT), and 1265-1298 (PAVG…HPTY).

The protein belongs to the TTC21 family. Component of the IFT complex A (IFT-A) complex. IFT-A complex is divided into a core subcomplex composed of IFT122:IFT140:WDR19 which is associated with TULP3 and a peripheral subcomplex composed of IFT43:WDR35:TTC21B. Interacts directy with WDR35 and TTC21B. Interacts with TTC25.

The protein resides in the cytoplasm. It is found in the cytoskeleton. Its subcellular location is the cilium axoneme. Its function is as follows. Component of the IFT complex A (IFT-A), a complex required for retrograde ciliary transport and entry into cilia of G protein-coupled receptors (GPCRs). Essential for retrograde trafficking of IFT-1, IFT-B and GPCRs. Negatively modulates the SHH signal transduction. The sequence is that of Tetratricopeptide repeat protein 21B (Ttc21b) from Mus musculus (Mouse).